Here is a 2729-residue protein sequence, read N- to C-terminus: 3-methylorcinaldehyde synthase (2729 aa).

The segment at L99–L238 is N-terminal acylcarrier protein transacylase domain (SAT). Over residues S361–G373 the composition is skewed to polar residues. Residues S361–H391 are disordered. The Ketosynthase family 3 (KS3) domain occupies D397–Q828. Active-site for beta-ketoacyl synthase activity residues include C571, H706, and H748. Residues F942–V1230 form a malonyl-CoA:ACP transacylase (MAT) domain region. S1029 (for acyl/malonyl transferase activity) is an active-site residue. The segment at E1345–D1479 is N-terminal hotdog fold. A PKS/mFAS DH domain is found at E1345 to E1669. The product template (PT) domain stretch occupies residues K1374–R1665. H1380 serves as the catalytic Proton acceptor; for dehydratase activity. The interval D1513–E1669 is C-terminal hotdog fold. The active-site Proton donor; for dehydratase activity is the D1575. Low complexity predominate over residues A1682 to A1701. Residues A1682 to G1726 form a disordered region. The span at T1707–G1716 shows a compositional bias: polar residues. Residues Q1750 to L1824 form the Carrier domain. S1784 is subject to O-(pantetheine 4'-phosphoryl)serine. Low complexity predominate over residues T1835–S1868. A disordered region spans residues T1835–M1874. Residues E2086–T2254 form a methyltransferase (C-MeT) domain region. Positions I2344–R2599 are reductase (R) domain.

Its pathway is secondary metabolite biosynthesis; terpenoid biosynthesis. Non-reducing polyketide synthase; part of the gene cluster that mediates the biosynthesis of xenovulene A, an unusual meroterpenoid that has potent inhibitory effects on the human gamma-aminobutyrate A (GABAA) benzodiazepine receptor. The first step of xenovulene A biosynthesis is the biosynthesis of 3-methylorcinaldehyde performed by the non-reducing polyketide synthase aspks1. The salicylate hydroxylase asL1 then catalyzes the oxidative dearomatization of 3-methylorcinaldehyde to yield a dearomatized hydroxycyclohexadione. The 2-oxoglutarate-dependent dioxygenase asL3 further catalyzes the oxidative ring expansion to provide the first tropolone metabolite. The cytochrome P450 monooxygenase asR2 allows the synthesis of tropolone hemiacetal. In parallel, a previously unrecognised class of terpene cyclase, asR6, produces alpha-humulene from farnesylpyrophosphate (FPP). The putative Diels-Alderase asR5 probably catalyzes the formation of the tropolone-humulene skeleton by linking humulene and the polyketide moiety. Oxidative-ring contractions catalyzed by asL4 and asL6 then processively remove carbon atoms from the polyketide to yield xenovulene A. This Sarocladium schorii (Acremonium strictum (strain IMI 501407)) protein is 3-methylorcinaldehyde synthase.